Consider the following 343-residue polypeptide: L-threonine 3-dehydrogenase (343 aa).

Residue Cys40 participates in Zn(2+) binding. Active-site charge relay system residues include Thr42 and His45. Positions 65, 66, 95, 98, 101, and 109 each coordinate Zn(2+). NAD(+)-binding positions include Ile177, Asp197, Arg202, 264–266 (LGI), and 288–289 (IY).

Belongs to the zinc-containing alcohol dehydrogenase family. Homotetramer. Zn(2+) is required as a cofactor.

It is found in the cytoplasm. It carries out the reaction L-threonine + NAD(+) = (2S)-2-amino-3-oxobutanoate + NADH + H(+). It participates in amino-acid degradation; L-threonine degradation via oxydo-reductase pathway; glycine from L-threonine: step 1/2. In terms of biological role, catalyzes the NAD(+)-dependent oxidation of L-threonine to 2-amino-3-ketobutyrate. This is L-threonine 3-dehydrogenase from Aliivibrio fischeri (strain MJ11) (Vibrio fischeri).